Consider the following 222-residue polypeptide: Ribose-5-phosphate isomerase A (222 aa).

Substrate-binding positions include 29 to 32 (TGST), 82 to 85 (DSAD), and 95 to 98 (KGGG). Catalysis depends on Glu104, which acts as the Proton acceptor. Residue Lys122 coordinates substrate.

This sequence belongs to the ribose 5-phosphate isomerase family. As to quaternary structure, homodimer.

The enzyme catalyses aldehydo-D-ribose 5-phosphate = D-ribulose 5-phosphate. The protein operates within carbohydrate degradation; pentose phosphate pathway; D-ribose 5-phosphate from D-ribulose 5-phosphate (non-oxidative stage): step 1/1. In terms of biological role, catalyzes the reversible conversion of ribose-5-phosphate to ribulose 5-phosphate. The chain is Ribose-5-phosphate isomerase A from Blochmanniella floridana.